The chain runs to 288 residues: NGG1-interacting factor 3 (288 aa).

This sequence belongs to the GTP cyclohydrolase I type 2/NIF3 family. In terms of assembly, may interact with NGG1.

The protein resides in the mitochondrion. The polypeptide is NGG1-interacting factor 3 (Saccharomyces cerevisiae (strain ATCC 204508 / S288c) (Baker's yeast)).